The chain runs to 537 residues: Caspase recruitment domain-containing protein 8 (537 aa).

The span at 1 to 23 (MEKKECPEKSSSSEEELPRRDSG) shows a compositional bias: basic and acidic residues. 2 disordered regions span residues 1–28 (MEKK…SRNI) and 113–133 (GDIP…SGDI). Positions 161-296 (FLGPEGNVDV…FYAVLESPSF (136 aa)) are ZU5. Residues 161–446 (FLGPEGNVDV…LQLVAASAPP (286 aa)) form the FIIND domain. Positions 297–446 (SLMGILLRIA…LQLVAASAPP (150 aa)) are UPA. A CARD domain is found at 446–536 (PPFSGAAFVK…YLVSYLRQQN (91 aa)).

In terms of assembly, interacts with DPP9; leading to inhibit activation of the inflammasome. DPP9 acts via formation of a ternary complex, composed of a DPP9 homodimer, one full-length CARD8 protein, and one cleaved C-terminus of CARD8 (Caspase recruitment domain-containing protein 8, C-terminus). Interacts with DPP8; leading to inhibit activation of the inflammasome, probably via formation of a ternary complex with DPP8. Interacts with NLRP3. Interacts with IKBKG/NEMO. Interacts with DRAL. Binds to caspase-1 (CASP1), CARD16/pseudo-ICE and CARD18/ICEBERG. Interacts with NLRP2 (via NACHT domain). As to quaternary structure, interacts with the C-terminal part of CARD8 (Caspase recruitment domain-containing protein 8, C-terminus) in absence of pathogens and other damage-associated signals. Interacts with the N-terminal part of CARD8 (Caspase recruitment domain-containing protein 8, N-terminus) in absence of pathogens and other damage-associated signals. Homomultimer; forms the CARD8 inflammasome polymeric complex, a filament composed of homopolymers of this form in response to pathogens and other damage-associated signals. The CARD8 inflammasome polymeric complex directly recruits pro-caspase-1 (proCASP1) independently of PYCARD/ASC. Interacts (via CARD domain) with CASP1 (via CARD domain); leading to CASP1 activation. Undergoes autocatalytic processing within the FIIND domain to generate the N-terminal and C-terminal parts, which are associated non-covalently in absence of pathogens and other damage-associated signals. In terms of processing, ubiquitinated by the N-end rule pathway in response to pathogens and other damage-associated signals, leading to its degradation by the proteasome and subsequent release of the cleaved C-terminal part of the protein (Caspase recruitment domain-containing protein 8, C-terminus), which polymerizes and forms the CARD8 inflammasome. Post-translationally, (Microbial infection) Proteolytic cleavage by HIV-1 protease in the disordered region and within the ZU5 region of the FIIND domain promotes ubiquitination of the N-terminal part by the N-end rule pathway and degradation by the proteasome, releasing the cleaved C-terminal part of the protein (Caspase recruitment domain-containing protein 8, C-terminus), which polymerizes and forms the CARD8 inflammasome. Undergoes less autocatalytic processing within the FIIND domain compared to isoform 5. As to expression, high expression in lung, ovary, testis and placenta. Lower expression in heart, kidney and liver. Also expressed in spleen, lymph node and bone marrow.

The protein localises to the cytoplasm. The protein resides in the nucleus. Its subcellular location is the inflammasome. CARD8 inflammasome is activated by HIV-1 protease activity: HIV-1 protease cleaves CARD8, promoting ubiquitination and degradation of the N-terminal part, releasing the cleaved C-terminal part of the protein (Caspase recruitment domain-containing protein 8, C-terminus), which polymerizes and forms the CARD8 inflammasome. CARD8 inflammasome is inhibited by DPP8 and DPP9, which sequester the C-terminal fragment of CARD8 (Caspase recruitment domain-containing protein 8, C-terminus) in a ternary complex, thereby preventing CARD8 oligomerization and activation. CARD8 inflammasome is activated by Val-boroPro (Talabostat, PT-100), an inhibitor of dipeptidyl peptidases DPP8 and DPP9. Val-boroPro relieves inhibition of DPP8 and/or DPP9 by inducing the proteasome-mediated destruction of the N-terminal part of CARD8, releasing its C-terminal part from autoinhibition. Indirectly activated by the pseudodipeptide CQ31. CQ31 directly inactivates the peptidases PEPD and XPNPEP1, leading to an accumulation of dipeptides that weaky inhibit DDP8 and DPP9, relieving DPP8- and/or DPP9-mediated inhibition of CARD8. Its function is as follows. Inflammasome sensor, which mediates inflammasome activation in response to various pathogen-associated signals, leading to subsequent pyroptosis of CD4(+) T-cells and macrophages. Inflammasomes are supramolecular complexes that assemble in the cytosol in response to pathogens and other damage-associated signals and play critical roles in innate immunity and inflammation. Acts as a recognition receptor (PRR): recognizes specific pathogens and other damage-associated signals, such as HIV-1 protease activity or Val-boroPro inhibitor, and mediates CARD8 inflammasome activation. In response to pathogen-associated signals, the N-terminal part of CARD8 is degraded by the proteasome, releasing the cleaved C-terminal part of the protein (Caspase recruitment domain-containing protein 8, C-terminus), which polymerizes to initiate the formation of the inflammasome complex: the CARD8 inflammasome directly recruits pro-caspase-1 (proCASP1) independently of PYCARD/ASC and promotes caspase-1 (CASP1) activation, which subsequently cleaves and activates inflammatory cytokines IL1B and IL18 and gasdermin-D (GSDMD), leading to pyroptosis. Ability to sense HIV-1 protease activity leads to the clearance of latent HIV-1 in patient CD4(+) T-cells after viral reactivation; in contrast, HIV-1 can evade CARD8-sensing when its protease remains inactive in infected cells prior to viral budding. Also acts as a negative regulator of the NLRP3 inflammasome. May also act as an inhibitor of NF-kappa-B activation. Constitutes the precursor of the CARD8 inflammasome, which mediates autoproteolytic processing within the FIIND domain to generate the N-terminal and C-terminal parts, which are associated non-covalently in absence of pathogens and other damage-associated signals. In terms of biological role, regulatory part that prevents formation of the CARD8 inflammasome: in absence of pathogens and other damage-associated signals, interacts with the C-terminal part of CARD8 (Caspase recruitment domain-containing protein 8, C-terminus), preventing activation of the CARD8 inflammasome. In response to pathogen-associated signals, this part is ubiquitinated by the N-end rule pathway and degraded by the proteasome, releasing the cleaved C-terminal part of the protein, which polymerizes and forms the CARD8 inflammasome. Functionally, constitutes the active part of the CARD8 inflammasome. In absence of pathogens and other damage-associated signals, interacts with the N-terminal part of CARD8 (Caspase recruitment domain-containing protein 8, N-terminus), preventing activation of the CARD8 inflammasome. In response to pathogen-associated signals, the N-terminal part of CARD8 is degraded by the proteasome, releasing this form, which polymerizes to form the CARD8 inflammasome complex: the CARD8 inflammasome complex then directly recruits pro-caspase-1 (proCASP1) and promotes caspase-1 (CASP1) activation, leading to gasdermin-D (GSDMD) cleavage and subsequent pyroptosis. The protein is Caspase recruitment domain-containing protein 8 of Homo sapiens (Human).